Consider the following 100-residue polypeptide: Large ribosomal subunit protein uL23 (100 aa).

The protein belongs to the universal ribosomal protein uL23 family. Part of the 50S ribosomal subunit. Contacts protein L29, and trigger factor when it is bound to the ribosome.

Functionally, one of the early assembly proteins it binds 23S rRNA. One of the proteins that surrounds the polypeptide exit tunnel on the outside of the ribosome. Forms the main docking site for trigger factor binding to the ribosome. In Mycobacterium sp. (strain JLS), this protein is Large ribosomal subunit protein uL23.